The primary structure comprises 910 residues: Leucine--tRNA ligase (910 aa).

Positions 50 to 60 match the 'HIGH' region motif; sequence PYTNGSLHVGH. Residues 611–615 carry the 'KMSKS' region motif; sequence KISKS. Lys614 is an ATP binding site.

This sequence belongs to the class-I aminoacyl-tRNA synthetase family.

It localises to the cytoplasm. It carries out the reaction tRNA(Leu) + L-leucine + ATP = L-leucyl-tRNA(Leu) + AMP + diphosphate. The protein is Leucine--tRNA ligase of Thermoplasma acidophilum (strain ATCC 25905 / DSM 1728 / JCM 9062 / NBRC 15155 / AMRC-C165).